The chain runs to 242 residues: DNA repair protein RecO (242 aa).

It belongs to the RecO family. In terms of assembly, monomer.

Involved in DNA repair and RecF pathway recombination. This is DNA repair protein RecO from Salmonella agona (strain SL483).